Here is a 366-residue protein sequence, read N- to C-terminus: Variable large protein 10 (366 aa).

The first 18 residues, Met-1–Ser-18, serve as a signal peptide directing secretion. Cys-19 is lipidated: N-palmitoyl cysteine. Cys-19 is lipidated: S-diacylglycerol cysteine.

The protein belongs to the variable large protein (Vlp) family. Beta subfamily.

It is found in the cell outer membrane. Functionally, the Vlp and Vsp proteins are antigenically distinct proteins, only one vlp or vsp gene is transcriptionally active at any one time. Switching between these genes is a mechanism of host immune response evasion. The polypeptide is Variable large protein 10 (Borrelia hermsii).